The primary structure comprises 97 residues: Large ribosomal subunit protein uL23 (97 aa).

This sequence belongs to the universal ribosomal protein uL23 family. In terms of assembly, part of the 50S ribosomal subunit. Contacts protein L29, and trigger factor when it is bound to the ribosome.

In terms of biological role, one of the early assembly proteins it binds 23S rRNA. One of the proteins that surrounds the polypeptide exit tunnel on the outside of the ribosome. Forms the main docking site for trigger factor binding to the ribosome. This chain is Large ribosomal subunit protein uL23, found in Lactococcus lactis subsp. cremoris (strain SK11).